The sequence spans 370 residues: Flagellar P-ring protein (370 aa).

An N-terminal signal peptide occupies residues M1–A27.

This sequence belongs to the FlgI family. As to quaternary structure, the basal body constitutes a major portion of the flagellar organelle and consists of four rings (L,P,S, and M) mounted on a central rod.

It is found in the periplasm. Its subcellular location is the bacterial flagellum basal body. Assembles around the rod to form the L-ring and probably protects the motor/basal body from shearing forces during rotation. The chain is Flagellar P-ring protein from Anaeromyxobacter sp. (strain K).